The sequence spans 27 residues: Nemertide alpha-8 (27 aa).

3 disulfides stabilise this stretch: Cys2/Cys16, Cys9/Cys20, and Cys15/Cys26.

It belongs to the nemertide family. In terms of tissue distribution, confined to the epidermis and to the mucus layer.

Its subcellular location is the secreted. In terms of biological role, highly potent toxin against both insect and some mammalian sodium channels (Nav). It potently inhibits inactivation of insect sodium channels of B.germanica (BgNav1) and also delays the inactivation of mammalian Nav with potent activity on Nav1.3/SCN3A and Nav1.4/SCN4A. 1 uM is enough to completely inhibits the inactivation, resulting in sustained non-inactivating currents. In addition, the toxin significantly enhances the recovery from inactivation, and the open state is not required for the toxin to interact with the channel. In vivo, injection into brine shrimp (Artemia salina) stops movement or causes death after 24 hours (EC(50)=0.4 uM). The chain is Nemertide alpha-8 from Riseriellus occultus (Ribbon worm).